We begin with the raw amino-acid sequence, 467 residues long: Probable lipase C1672.09 (467 aa).

Topologically, residues 1 to 17 are cytoplasmic; sequence MIQLPFIQRLKWEEYMA. Residues 18 to 38 form a helical; Signal-anchor for type II membrane protein membrane-spanning segment; that stretch reads LFLGFFFVIFEKLLSCLAFMI. The Lumenal portion of the chain corresponds to 39-467; sequence HNTLGLFYRS…NHIAPRNKPI (429 aa). Serine 66 carries the post-translational modification Phosphoserine. In terms of domain architecture, AB hydrolase-1 spans 127-421; it reads PVVYCHHGLL…SYEHLDMIWA (295 aa). The active-site Nucleophile is serine 222. 2 N-linked (GlcNAc...) asparagine glycosylation sites follow: asparagine 311 and asparagine 316. Catalysis depends on charge relay system residues aspartate 389 and histidine 415. Residues 440–457 show a composition bias toward basic and acidic residues; sequence HHPPEHEENDKENREIQK. Residues 440-467 are disordered; that stretch reads HHPPEHEENDKENREIQKNHIAPRNKPI.

It belongs to the AB hydrolase superfamily. Lipase family.

The protein resides in the cytoplasm. The protein localises to the membrane. In terms of biological role, probable lipase. The sequence is that of Probable lipase C1672.09 from Schizosaccharomyces pombe (strain 972 / ATCC 24843) (Fission yeast).